We begin with the raw amino-acid sequence, 1042 residues long: Elongation factor 3 (1042 aa).

HEAT repeat units follow at residues 9-46 (KVLMDLIPKLKISMQETDKNEVIKNSEQHSSVSWDPDT), 86-124 (PYLVRLLPRVLKQVGLEKVAAVRTQASTVAEDIIKTMNP), 167-204 (YRLPELIPILSESMWDTRTDIKNQARKTMTSVCTLISN), 206-242 (DIDKFIPVLIDCIAQPEKVPETIHTLGATTFVQEVHA), 243-280 (STLSIMVPLLYRGLNERETTIKRKSAVIIDNMCKLVED), and 289-327 (PKLIPTLEHIKETIGDPECRSVVNRSLATLIRVGNVKEG). ABC transporter domains are found at residues 425 to 642 (EEGE…YQDI) and 668 to 994 (CRMR…EQEE). Positions 704, 923, 926, and 952 each coordinate ADP. The disordered stretch occupies residues 1009–1042 (KKAKKLTSSELRKKKKERMARRKKGEEVFSDEDD). The span at 1020 to 1031 (RKKKKERMARRK) shows a compositional bias: basic residues.

This sequence belongs to the ABC transporter superfamily. ABCF family. EF3 subfamily. Monomer.

It localises to the cytoplasm. It catalyses the reaction ATP + H2O = ADP + phosphate + H(+). It functions in the pathway protein biosynthesis; polypeptide chain elongation. Functionally, ribosome-dependent ATPase that functions in cytoplasmic translation elongation. Required for the ATP-dependent release of deacylated tRNA from the ribosomal E-site during protein biosynthesis. Stimulates the eEF1A-dependent binding of aminoacyl-tRNA to the ribosomal A-site, which has reduced affinity for tRNA as long as the E-site is occupied. Assists translation termination by stimulating the release of nascent protein from the ribosome by release factors. The sequence is that of Elongation factor 3 (TEF3) from Pneumocystis carinii.